A 717-amino-acid polypeptide reads, in one-letter code: Serologically defined colon cancer antigen 8 homolog (717 aa).

A phosphoserine mark is found at S4 and S28. A disordered region spans residues 84–115; that stretch reads QTNKENETSPPRRRKLSPSRPSECDDGSMPTM. 4 coiled-coil regions span residues 129–168, 221–278, 352–590, and 622–712; these read IHHL…KSQR, DANK…LAAS, EEAN…SEQY, and RSQI…LPSM. The segment at 216–717 is sufficient for homodimerization; sequence TASTGDANKW…QLPSMPQSDC (502 aa).

In terms of assembly, homodimer. Interacts with OFD1; the interaction is direct. Interacts with FAM161A. Interacts with RABEP2, ERC1 and CEP131. In terms of tissue distribution, expressed in liver, kidney, spleen, brain, heart and muscle. Expressed in photoreceptor cells of the retina.

It is found in the cytoplasm. The protein localises to the cytoskeleton. The protein resides in the microtubule organizing center. It localises to the centrosome. Its subcellular location is the centriole. It is found in the cilium basal body. The protein localises to the cell junction. In terms of biological role, plays a role in the establishment of cell polarity and epithelial lumen formation. Also plays an essential role in ciliogenesis and subsequent Hedgehog signaling pathway that requires the presence of intact primary cilia for pathway activation. Mechanistically, interacts with and mediates RABEP2 centrosomal localization which is critical for ciliogenesis. The chain is Serologically defined colon cancer antigen 8 homolog (Sdccag8) from Mus musculus (Mouse).